Reading from the N-terminus, the 122-residue chain is C-C motif chemokine 9 (122 aa).

Residues 1-21 form the signal peptide; the sequence is MKPFHTALSFLILTTALGIWA. Intrachain disulfides connect Cys-57-Cys-80, Cys-58-Cys-96, and Cys-67-Cys-107.

This sequence belongs to the intercrine beta (chemokine CC) family. Post-translationally, the N-terminal is proteolytically cleaved by proteases associated with inflammatory responses. The processed forms CCL9(29-101), CCL9(30-101) and CCL9(31-101) exhibit increase in CCR1-mediated signaling and chemotaxis assays in vitro. As to expression, expressed mainly in the liver, lung, and the thymus, although some expression has been detected in a wide variety of tissues except brain.

It is found in the secreted. In terms of biological role, monokine with inflammatory, pyrogenic and chemokinetic properties. Circulates at high concentrations in the blood of healthy animals. Binding to a high-affinity receptor activates calcium release in neutrophils. It also inhibits colony formation of bone marrow myeloid immature progenitors. In Mus musculus (Mouse), this protein is C-C motif chemokine 9 (Ccl9).